The following is an 89-amino-acid chain: UPF0237 protein DIP1286 (89 aa).

One can recognise an ACT domain in the interval 4-78 (IISVTGADHT…KDQNLVIRIQ (75 aa)).

Belongs to the UPF0237 family.

The sequence is that of UPF0237 protein DIP1286 from Corynebacterium diphtheriae (strain ATCC 700971 / NCTC 13129 / Biotype gravis).